The following is a 462-amino-acid chain: Na(+)/H(+) antiporter NhaA 2 (462 aa).

The interval 1-31 is disordered; the sequence is MKSSTREQTPVTSPTPHDPTPPTPPRGSTPL. Positions 16 to 27 are enriched in pro residues; sequence PHDPTPPTPPRG. The next 11 helical transmembrane spans lie at 52 to 72, 96 to 116, 134 to 154, 165 to 185, 195 to 215, 218 to 238, 244 to 264, 309 to 329, 337 to 357, 382 to 402, and 408 to 428; these read IGGALLLLGTVVALVWANSPW, LTLGQWAADGLLAIFFFIAGL, LVPVAAAVGGMAVPAVVYVLV, GWAIPTATDIAFAVAVLAVIS, FLLTLAVVDDLLAITIIAIFY, TLAVLPLLGALAVIAVFGLLV, SWWLLIPLAVVAWALMHASGI, FAVPVFAFFSAGVTVGGLSGL, VALGIVAGLVVGKAAGILGAT, LLGGIGFTVSLLIGELAFGAG, and HVKVGVLTGSLLAAALAAVVL.

It belongs to the NhaA Na(+)/H(+) (TC 2.A.33) antiporter family.

It localises to the cell membrane. The catalysed reaction is Na(+)(in) + 2 H(+)(out) = Na(+)(out) + 2 H(+)(in). Na(+)/H(+) antiporter that extrudes sodium in exchange for external protons. This chain is Na(+)/H(+) antiporter NhaA 2, found in Kineococcus radiotolerans (strain ATCC BAA-149 / DSM 14245 / SRS30216).